A 227-amino-acid polypeptide reads, in one-letter code: MKQLLKDSWWNQLKDEFDKPYYQELREMLKQEYSSQTIYPDSHDIFNALHYTPYEDVKAVILGQDPYHGPGQAHGLSFSVQPGVRQPPSLKNIFIELQDDIGCSVPNHGSLVSWAKQGVLLLNTVLTVRRGQANSHKGKGWERLTDRIIDVVNEREKPIVFILWGRHAQMKKERIDTSKHIIIESTHPSPFSARNGFFGSRPFSRTNAALEKMGEQPIDWCIPDLPQ.

The Proton acceptor role is filled by D65.

The protein belongs to the uracil-DNA glycosylase (UDG) superfamily. UNG family.

Its subcellular location is the cytoplasm. It catalyses the reaction Hydrolyzes single-stranded DNA or mismatched double-stranded DNA and polynucleotides, releasing free uracil.. Excises uracil residues from the DNA which can arise as a result of misincorporation of dUMP residues by DNA polymerase or due to deamination of cytosine. This chain is Uracil-DNA glycosylase, found in Bacillus velezensis (strain DSM 23117 / BGSC 10A6 / LMG 26770 / FZB42) (Bacillus amyloliquefaciens subsp. plantarum).